The sequence spans 207 residues: Outer-membrane lipoprotein LolB (207 aa).

Positions 1–21 (MPLPDFRLIRLLPLAALVLTA) are cleaved as a signal peptide. The N-palmitoyl cysteine moiety is linked to residue C22. C22 is lipidated: S-diacylglycerol cysteine.

This sequence belongs to the LolB family. As to quaternary structure, monomer.

Its subcellular location is the cell outer membrane. In terms of biological role, plays a critical role in the incorporation of lipoproteins in the outer membrane after they are released by the LolA protein. This is Outer-membrane lipoprotein LolB from Escherichia coli (strain SMS-3-5 / SECEC).